The primary structure comprises 474 residues: Glutathione synthetase (474 aa).

The residue at position 2 (Ala2) is an N-acetylalanine. Substrate is bound at residue Arg125. Glu144 contributes to the ATP binding site. Residues Glu144 and Asn146 each coordinate Mg(2+). Substrate is bound by residues 148-151, 214-216, Gln220, and 267-270; these read VSAS, ERN, and RDGY. ATP is bound by residues Lys305, 364-373, Tyr375, and 398-401; these read KPQREGGGNN and MEKI. Glu368 provides a ligand contact to Mg(2+). Position 415 is a phosphoserine (Ser415). Glu425 serves as a coordination point for ATP. Position 450 (Arg450) interacts with substrate. Residues Lys452 and Asp458 each contribute to the ATP site. 461-462 provides a ligand contact to substrate; that stretch reads VA.

The protein belongs to the eukaryotic GSH synthase family. In terms of assembly, homodimer. The cofactor is Mg(2+).

The enzyme catalyses gamma-L-glutamyl-L-cysteine + glycine + ATP = glutathione + ADP + phosphate + H(+). The catalysed reaction is gamma-L-glutamyl-(2S)-2-aminobutanoate + glycine + ATP = ophthalmate + ADP + phosphate + H(+). It functions in the pathway sulfur metabolism; glutathione biosynthesis; glutathione from L-cysteine and L-glutamate: step 2/2. In terms of biological role, catalyzes the production of glutathione from gamma-glutamylcysteine and glycine in an ATP-dependent manner. Glutathione (gamma-glutamylcysteinylglycine, GSH) is the most abundant intracellular thiol in living aerobic cells and is required for numerous processes including the protection of cells against oxidative damage, amino acid transport, the detoxification of foreign compounds, the maintenance of protein sulfhydryl groups in a reduced state and acts as a cofactor for a number of enzymes. Participates in ophthalmate biosynthesis in hepatocytes. The chain is Glutathione synthetase from Bos taurus (Bovine).